Consider the following 876-residue polypeptide: Alanine--tRNA ligase (876 aa).

Positions 565, 569, 667, and 671 each coordinate Zn(2+).

It belongs to the class-II aminoacyl-tRNA synthetase family. Zn(2+) is required as a cofactor.

It localises to the cytoplasm. It carries out the reaction tRNA(Ala) + L-alanine + ATP = L-alanyl-tRNA(Ala) + AMP + diphosphate. In terms of biological role, catalyzes the attachment of alanine to tRNA(Ala) in a two-step reaction: alanine is first activated by ATP to form Ala-AMP and then transferred to the acceptor end of tRNA(Ala). Also edits incorrectly charged Ser-tRNA(Ala) and Gly-tRNA(Ala) via its editing domain. The sequence is that of Alanine--tRNA ligase from Staphylococcus aureus (strain Mu3 / ATCC 700698).